The primary structure comprises 184 residues: Ribosome-recycling factor (184 aa).

Over residues 133 to 162 (RDGMDNLKQDENKKEISEDERKRHETEVQK) the composition is skewed to basic and acidic residues. The interval 133–163 (RDGMDNLKQDENKKEISEDERKRHETEVQKL) is disordered.

The protein belongs to the RRF family.

The protein resides in the cytoplasm. In terms of biological role, responsible for the release of ribosomes from messenger RNA at the termination of protein biosynthesis. May increase the efficiency of translation by recycling ribosomes from one round of translation to another. The polypeptide is Ribosome-recycling factor (Sphingopyxis alaskensis (strain DSM 13593 / LMG 18877 / RB2256) (Sphingomonas alaskensis)).